The chain runs to 861 residues: DNA mismatch repair protein MutS (861 aa).

618-625 (GPNMGGKS) provides a ligand contact to ATP.

It belongs to the DNA mismatch repair MutS family.

Its function is as follows. This protein is involved in the repair of mismatches in DNA. It is possible that it carries out the mismatch recognition step. This protein has a weak ATPase activity. The protein is DNA mismatch repair protein MutS of Shewanella sp. (strain MR-7).